A 763-amino-acid chain; its full sequence is Phosphoglycerol transferase I (763 aa).

A run of 4 helical transmembrane segments spans residues 1–21, 26–46, 77–97, and 108–128; these read MSEL…AWKA, WWFA…ITLY, ILPG…LGWV, and VGYS…SPAF.

Belongs to the OpgB family.

Its subcellular location is the cell inner membrane. It catalyses the reaction a phosphatidylglycerol + a membrane-derived-oligosaccharide D-glucose = a 1,2-diacyl-sn-glycerol + a membrane-derived-oligosaccharide 6-(glycerophospho)-D-glucose.. It participates in glycan metabolism; osmoregulated periplasmic glucan (OPG) biosynthesis. Functionally, transfers a phosphoglycerol residue from phosphatidylglycerol to the membrane-bound nascent glucan backbones. The chain is Phosphoglycerol transferase I from Salmonella schwarzengrund (strain CVM19633).